We begin with the raw amino-acid sequence, 427 residues long: Serine--tRNA ligase (427 aa).

231–233 (TAE) serves as a coordination point for L-serine. 262–264 (RSE) contacts ATP. E285 contributes to the L-serine binding site. Position 349–352 (349–352 (EISS)) interacts with ATP. S385 lines the L-serine pocket.

The protein belongs to the class-II aminoacyl-tRNA synthetase family. Type-1 seryl-tRNA synthetase subfamily. In terms of assembly, homodimer. The tRNA molecule binds across the dimer.

It localises to the cytoplasm. It carries out the reaction tRNA(Ser) + L-serine + ATP = L-seryl-tRNA(Ser) + AMP + diphosphate + H(+). The catalysed reaction is tRNA(Sec) + L-serine + ATP = L-seryl-tRNA(Sec) + AMP + diphosphate + H(+). It functions in the pathway aminoacyl-tRNA biosynthesis; selenocysteinyl-tRNA(Sec) biosynthesis; L-seryl-tRNA(Sec) from L-serine and tRNA(Sec): step 1/1. Its function is as follows. Catalyzes the attachment of serine to tRNA(Ser). Is also able to aminoacylate tRNA(Sec) with serine, to form the misacylated tRNA L-seryl-tRNA(Sec), which will be further converted into selenocysteinyl-tRNA(Sec). This chain is Serine--tRNA ligase, found in Rhizobium etli (strain ATCC 51251 / DSM 11541 / JCM 21823 / NBRC 15573 / CFN 42).